Consider the following 888-residue polypeptide: Translation initiation factor IF-2 (888 aa).

2 disordered regions span residues 96–122 (TTKQ…EAPE) and 158–302 (ELKE…SAPT). Basic and acidic residues-rich tracts occupy residues 98-114 (KQDE…EDVS) and 158-167 (ELKEKQEKRR). Over residues 181 to 206 (TQVQEPGSETAAVSGSVAATQPESTE) the composition is skewed to polar residues. Low complexity predominate over residues 207 to 225 (TAAVTPSATITVTTQTTPA). Composition is skewed to basic and acidic residues over residues 226–243 (AKER…EKGE) and 253–269 (EAWK…KARG). Residues 390-559 (SRAPVVTVMG…LLQAEVLELK (170 aa)) enclose the tr-type G domain. A G1 region spans residues 399–406 (GHVDHGKT). 399–406 (GHVDHGKT) serves as a coordination point for GTP. The tract at residues 424 to 428 (GITQH) is G2. The G3 stretch occupies residues 445–448 (DTPG). GTP-binding positions include 445-449 (DTPGH) and 499-502 (NKMD). The tract at residues 499–502 (NKMD) is G4. Positions 535 to 537 (SAK) are G5.

The protein belongs to the TRAFAC class translation factor GTPase superfamily. Classic translation factor GTPase family. IF-2 subfamily.

Its subcellular location is the cytoplasm. Functionally, one of the essential components for the initiation of protein synthesis. Protects formylmethionyl-tRNA from spontaneous hydrolysis and promotes its binding to the 30S ribosomal subunits. Also involved in the hydrolysis of GTP during the formation of the 70S ribosomal complex. This Nitrosomonas eutropha (strain DSM 101675 / C91 / Nm57) protein is Translation initiation factor IF-2.